A 181-amino-acid polypeptide reads, in one-letter code: Crossover junction endodeoxyribonuclease RuvC (181 aa).

Catalysis depends on residues Asp8, Glu67, and Asp139. Positions 8, 67, and 139 each coordinate Mg(2+).

It belongs to the RuvC family. As to quaternary structure, homodimer which binds Holliday junction (HJ) DNA. The HJ becomes 2-fold symmetrical on binding to RuvC with unstacked arms; it has a different conformation from HJ DNA in complex with RuvA. In the full resolvosome a probable DNA-RuvA(4)-RuvB(12)-RuvC(2) complex forms which resolves the HJ. The cofactor is Mg(2+).

It is found in the cytoplasm. It catalyses the reaction Endonucleolytic cleavage at a junction such as a reciprocal single-stranded crossover between two homologous DNA duplexes (Holliday junction).. Functionally, the RuvA-RuvB-RuvC complex processes Holliday junction (HJ) DNA during genetic recombination and DNA repair. Endonuclease that resolves HJ intermediates. Cleaves cruciform DNA by making single-stranded nicks across the HJ at symmetrical positions within the homologous arms, yielding a 5'-phosphate and a 3'-hydroxyl group; requires a central core of homology in the junction. The consensus cleavage sequence is 5'-(A/T)TT(C/G)-3'. Cleavage occurs on the 3'-side of the TT dinucleotide at the point of strand exchange. HJ branch migration catalyzed by RuvA-RuvB allows RuvC to scan DNA until it finds its consensus sequence, where it cleaves and resolves the cruciform DNA. The protein is Crossover junction endodeoxyribonuclease RuvC of Acinetobacter baylyi (strain ATCC 33305 / BD413 / ADP1).